The chain runs to 325 residues: Cytochrome f (325 aa).

A signal peptide spans 1 to 40 (MKTPELMAIWQRLKTACLVAIATFGLFFASDVLFPQAAAA). Tyrosine 41, cysteine 62, cysteine 65, and histidine 66 together coordinate heme. The chain crosses the membrane as a helical span at residues 290-309 (IYGYMAFVAGIMLTQIFLVL).

The protein belongs to the cytochrome f family. As to quaternary structure, the 4 large subunits of the cytochrome b6-f complex are cytochrome b6, subunit IV (17 kDa polypeptide, PetD), cytochrome f and the Rieske protein, while the 4 small subunits are PetG, PetL, PetM and PetN. The complex functions as a dimer. Requires heme as cofactor.

Its subcellular location is the cellular thylakoid membrane. Its function is as follows. Component of the cytochrome b6-f complex, which mediates electron transfer between photosystem II (PSII) and photosystem I (PSI), cyclic electron flow around PSI, and state transitions. The protein is Cytochrome f (petA) of Picosynechococcus sp. (strain ATCC 27264 / PCC 7002 / PR-6) (Agmenellum quadruplicatum).